A 100-amino-acid polypeptide reads, in one-letter code: NADH-quinone oxidoreductase subunit K (100 aa).

Helical transmembrane passes span 4–24 (MQHG…GLLI), 28–48 (LIFM…AWVV), and 60–80 (IFYL…LALL).

This sequence belongs to the complex I subunit 4L family. In terms of assembly, NDH-1 is composed of 13 different subunits. Subunits NuoA, H, J, K, L, M, N constitute the membrane sector of the complex.

Its subcellular location is the cell membrane. The enzyme catalyses a quinone + NADH + 5 H(+)(in) = a quinol + NAD(+) + 4 H(+)(out). Its function is as follows. NDH-1 shuttles electrons from NADH, via FMN and iron-sulfur (Fe-S) centers, to quinones in the respiratory chain. The immediate electron acceptor for the enzyme in this species is believed to be ubiquinone. Couples the redox reaction to proton translocation (for every two electrons transferred, four hydrogen ions are translocated across the cytoplasmic membrane), and thus conserves the redox energy in a proton gradient. This Hamiltonella defensa subsp. Acyrthosiphon pisum (strain 5AT) protein is NADH-quinone oxidoreductase subunit K.